The chain runs to 691 residues: DNA ligase (691 aa).

Residues 41-45 (DAEYD), 90-91 (SL), and glutamate 130 contribute to the NAD(+) site. The active-site N6-AMP-lysine intermediate is lysine 132. Residues arginine 153, glutamate 190, lysine 307, and lysine 331 each coordinate NAD(+). Cysteine 425, cysteine 428, cysteine 443, and cysteine 449 together coordinate Zn(2+). The BRCT domain occupies 610–691 (APQGVLAGKT…MHKLLEGHAR (82 aa)).

This sequence belongs to the NAD-dependent DNA ligase family. LigA subfamily. The cofactor is Mg(2+). It depends on Mn(2+) as a cofactor.

The catalysed reaction is NAD(+) + (deoxyribonucleotide)n-3'-hydroxyl + 5'-phospho-(deoxyribonucleotide)m = (deoxyribonucleotide)n+m + AMP + beta-nicotinamide D-nucleotide.. Its function is as follows. DNA ligase that catalyzes the formation of phosphodiester linkages between 5'-phosphoryl and 3'-hydroxyl groups in double-stranded DNA using NAD as a coenzyme and as the energy source for the reaction. It is essential for DNA replication and repair of damaged DNA. The chain is DNA ligase from Burkholderia thailandensis (strain ATCC 700388 / DSM 13276 / CCUG 48851 / CIP 106301 / E264).